Here is a 396-residue protein sequence, read N- to C-terminus: Stearoyl-[acyl-carrier-protein] 9-desaturase, chloroplastic (396 aa).

A chloroplast-targeting transit peptide spans 1–33 (MALKLNPFLSQTQKLPSFALPPMASTRSPKFYM). Fe cation is bound by residues glutamate 138, glutamate 176, histidine 179, glutamate 229, glutamate 262, and histidine 265.

It belongs to the fatty acid desaturase type 2 family. As to quaternary structure, homodimer. It depends on Fe(2+) as a cofactor. Higher levels in developing seeds than in leaf and root tissues.

The protein resides in the plastid. It localises to the chloroplast. It carries out the reaction octadecanoyl-[ACP] + 2 reduced [2Fe-2S]-[ferredoxin] + O2 + 2 H(+) = (9Z)-octadecenoyl-[ACP] + 2 oxidized [2Fe-2S]-[ferredoxin] + 2 H2O. Its pathway is lipid metabolism; fatty acid metabolism. Its function is as follows. Converts stearoyl-ACP to oleoyl-ACP by introduction of a cis double bond between carbons 9 and 10 of the acyl chain. The sequence is that of Stearoyl-[acyl-carrier-protein] 9-desaturase, chloroplastic from Ricinus communis (Castor bean).